The primary structure comprises 437 residues: Enolase 1 (437 aa).

Q164 contributes to the (2R)-2-phosphoglycerate binding site. Residue E206 is the Proton donor of the active site. The Mg(2+) site is built by D244, E289, and D316. (2R)-2-phosphoglycerate-binding residues include K341, R370, S371, and K392. K341 serves as the catalytic Proton acceptor.

It belongs to the enolase family. The cofactor is Mg(2+).

The protein localises to the cytoplasm. It is found in the secreted. It localises to the cell surface. It catalyses the reaction (2R)-2-phosphoglycerate = phosphoenolpyruvate + H2O. It functions in the pathway carbohydrate degradation; glycolysis; pyruvate from D-glyceraldehyde 3-phosphate: step 4/5. Functionally, catalyzes the reversible conversion of 2-phosphoglycerate (2-PG) into phosphoenolpyruvate (PEP). It is essential for the degradation of carbohydrates via glycolysis. The chain is Enolase 1 from Desulfitobacterium hafniense (strain Y51).